The primary structure comprises 202 residues: MSRYRGPRVRIIRRLGTLPGLTNKTPQLKSSSINQSISNKKISQYRIRLEEKQKLRFHYGITERQLLNYVRIARKAKGSTGEVLLQLLEMRLDNVTFRLGMAPTIPGARQLVNHRHILVNDCIVDIPSYRCKPQDFITIKNQRKSETIISKNIEFYQKSKIPNHLTYSSLEKKGLVNQILDRESIGLKINELLVVEYYSRQA.

In terms of domain architecture, S4 RNA-binding spans 90-153; that stretch reads MRLDNVTFRL…KSETIISKNI (64 aa).

This sequence belongs to the universal ribosomal protein uS4 family. Part of the 30S ribosomal subunit. Contacts protein S5. The interaction surface between S4 and S5 is involved in control of translational fidelity.

It localises to the plastid. It is found in the chloroplast. One of the primary rRNA binding proteins, it binds directly to 16S rRNA where it nucleates assembly of the body of the 30S subunit. In terms of biological role, with S5 and S12 plays an important role in translational accuracy. In Hypnum cupressiforme (Cypress-leaved plait-moss), this protein is Small ribosomal subunit protein uS4c (rps4).